A 411-amino-acid polypeptide reads, in one-letter code: Tyrosine--tRNA ligase (411 aa).

Position 34 (Y34) interacts with L-tyrosine. The 'HIGH' region signature appears at 39 to 48 (CTATSLHIGS). The L-tyrosine site is built by Y171 and Q175. Positions 231-235 (KMGKT) match the 'KMSKS' region motif. K234 lines the ATP pocket. The region spanning 345 to 411 (ISAYELFYEA…GKKRHILVRV (67 aa)) is the S4 RNA-binding domain.

This sequence belongs to the class-I aminoacyl-tRNA synthetase family. TyrS type 1 subfamily. As to quaternary structure, homodimer.

The protein localises to the cytoplasm. It carries out the reaction tRNA(Tyr) + L-tyrosine + ATP = L-tyrosyl-tRNA(Tyr) + AMP + diphosphate + H(+). Functionally, catalyzes the attachment of tyrosine to tRNA(Tyr) in a two-step reaction: tyrosine is first activated by ATP to form Tyr-AMP and then transferred to the acceptor end of tRNA(Tyr). This chain is Tyrosine--tRNA ligase, found in Rickettsia rickettsii (strain Sheila Smith).